A 262-amino-acid polypeptide reads, in one-letter code: Phosphatidylglycerol--prolipoprotein diacylglyceryl transferase (262 aa).

A run of 4 helical transmembrane segments spans residues 9 to 29, 41 to 61, 80 to 100, and 109 to 129; these read LGPLAIRWYALCIVTGLILAV, IIPDDILDFILVAFPLAILGA, IFAIWNGGLAIYGGLITGALV, and LINTWDFLDIAAPSVMIAQSL. An a 1,2-diacyl-sn-glycero-3-phospho-(1'-sn-glycerol)-binding site is contributed by Arg131. 3 helical membrane-spanning segments follow: residues 167-187, 197-217, and 226-246; these read QPTFLYESLWNLLGFALILIF, GHITAFYLIWYGFGRMVIEGM, and GFRVSQWLSVVLIGLGIMIVI.

The protein belongs to the Lgt family.

The protein localises to the cell membrane. It catalyses the reaction L-cysteinyl-[prolipoprotein] + a 1,2-diacyl-sn-glycero-3-phospho-(1'-sn-glycerol) = an S-1,2-diacyl-sn-glyceryl-L-cysteinyl-[prolipoprotein] + sn-glycerol 1-phosphate + H(+). It participates in protein modification; lipoprotein biosynthesis (diacylglyceryl transfer). In terms of biological role, catalyzes the transfer of the diacylglyceryl group from phosphatidylglycerol to the sulfhydryl group of the N-terminal cysteine of a prolipoprotein, the first step in the formation of mature lipoproteins. The sequence is that of Phosphatidylglycerol--prolipoprotein diacylglyceryl transferase from Streptococcus pneumoniae serotype 4 (strain ATCC BAA-334 / TIGR4).